The following is a 500-amino-acid chain: Catalase (500 aa).

Active-site residues include H59 and N131. Y339 serves as a coordination point for heme.

This sequence belongs to the catalase family. Heme is required as a cofactor.

The enzyme catalyses 2 H2O2 = O2 + 2 H2O. Its function is as follows. Decomposes hydrogen peroxide into water and oxygen; serves to protect cells from the toxic effects of hydrogen peroxide. The sequence is that of Catalase (katA) from Neisseria gonorrhoeae.